We begin with the raw amino-acid sequence, 721 residues long: Polyribonucleotide nucleotidyltransferase (721 aa).

Residues Asp-490 and Asp-496 each coordinate Mg(2+). Residues 557-618 (PRILTLKINP…EAVRQKIEGL (62 aa)) form the KH domain. The region spanning 625–693 (GEEYEGTVVK…DRGKIDLIRP (69 aa)) is the S1 motif domain. A disordered region spans residues 696-721 (EGKIAPREPRAARAGGDRGGRPPRRE).

The protein belongs to the polyribonucleotide nucleotidyltransferase family. The cofactor is Mg(2+).

The protein resides in the cytoplasm. The enzyme catalyses RNA(n+1) + phosphate = RNA(n) + a ribonucleoside 5'-diphosphate. Functionally, involved in mRNA degradation. Catalyzes the phosphorolysis of single-stranded polyribonucleotides processively in the 3'- to 5'-direction. This Deinococcus geothermalis (strain DSM 11300 / CIP 105573 / AG-3a) protein is Polyribonucleotide nucleotidyltransferase.